The sequence spans 217 residues: Peptide methionine sulfoxide reductase MsrA (217 aa).

The active site involves C56.

It belongs to the MsrA Met sulfoxide reductase family.

The enzyme catalyses L-methionyl-[protein] + [thioredoxin]-disulfide + H2O = L-methionyl-(S)-S-oxide-[protein] + [thioredoxin]-dithiol. The catalysed reaction is [thioredoxin]-disulfide + L-methionine + H2O = L-methionine (S)-S-oxide + [thioredoxin]-dithiol. Its function is as follows. Has an important function as a repair enzyme for proteins that have been inactivated by oxidation. Catalyzes the reversible oxidation-reduction of methionine sulfoxide in proteins to methionine. The sequence is that of Peptide methionine sulfoxide reductase MsrA from Corynebacterium glutamicum (strain R).